The chain runs to 485 residues: Glutamyl-tRNA(Gln) amidotransferase subunit A (485 aa).

Residues Lys78 and Ser153 each act as charge relay system in the active site. The active-site Acyl-ester intermediate is Ser177.

It belongs to the amidase family. GatA subfamily. As to quaternary structure, heterotrimer of A, B and C subunits.

The catalysed reaction is L-glutamyl-tRNA(Gln) + L-glutamine + ATP + H2O = L-glutaminyl-tRNA(Gln) + L-glutamate + ADP + phosphate + H(+). Its function is as follows. Allows the formation of correctly charged Gln-tRNA(Gln) through the transamidation of misacylated Glu-tRNA(Gln) in organisms which lack glutaminyl-tRNA synthetase. The reaction takes place in the presence of glutamine and ATP through an activated gamma-phospho-Glu-tRNA(Gln). In Bacillus cereus (strain G9842), this protein is Glutamyl-tRNA(Gln) amidotransferase subunit A.